The primary structure comprises 172 residues: Capsid protein (172 aa).

The interval 1–26 is disordered; the sequence is MASKWNWSGTKGRRTPRRPYGRPYKS. The segment covering 11 to 20 has biased composition (basic residues); it reads KGRRTPRRPY.

It belongs to the nanoviridae capsid protein family.

It localises to the virion. This chain is Capsid protein (DNA-S), found in Faba bean necrotic yellows virus (isolate Egyptian EV1-93) (FBNYV).